The chain runs to 182 residues: MSRIGKMPIKVPPGIKVDINGNDVTVKGPKGTLSRSFRPEVTINREGDYLVVAPVGTDKATRSFFGLSRTLLDNMIVGVKDGFDKNLEIVGVGMRADKDGDKVVFKVGFSHSVTVAPPAGITLSVDGTTKVKVSGINKEDVGQMAAEIRSIRKPDHYMGKGIRYAGEYVRIKPGKAIGKGAK.

This sequence belongs to the universal ribosomal protein uL6 family. In terms of assembly, part of the 50S ribosomal subunit.

This protein binds to the 23S rRNA, and is important in its secondary structure. It is located near the subunit interface in the base of the L7/L12 stalk, and near the tRNA binding site of the peptidyltransferase center. The chain is Large ribosomal subunit protein uL6 from Dehalococcoides mccartyi (strain CBDB1).